The primary structure comprises 394 residues: 4-hydroxyphenylpyruvate dioxygenase (394 aa).

VOC domains follow at residues 18–149 and 181–339; these read SFHH…LLEY and FIDH…IFTK. Residues His-184, His-267, and Glu-350 each coordinate Fe cation.

The protein belongs to the 4HPPD family. Homodimer. Fe cation is required as a cofactor.

The protein resides in the cytoplasm. The protein localises to the endoplasmic reticulum membrane. It localises to the golgi apparatus membrane. The enzyme catalyses 3-(4-hydroxyphenyl)pyruvate + O2 = homogentisate + CO2. The protein operates within amino-acid degradation; L-phenylalanine degradation; acetoacetate and fumarate from L-phenylalanine: step 3/6. Functionally, catalyzes the conversion of 4-hydroxyphenylpyruvic acid to homogentisic acid, one of the steps in tyrosine catabolism. The chain is 4-hydroxyphenylpyruvate dioxygenase (hpd) from Xenopus tropicalis (Western clawed frog).